Reading from the N-terminus, the 660-residue chain is Poly [ADP-ribose] polymerase 2-A (660 aa).

Residues 2–36 (SARLRVEELRAELQRRGLDASGNKPVLVRRLDAAI) enclose the SAP 1 domain. The interval 40-92 (EEEEAAVSAAAKEEADAGGVVDGEGNGEDKRKRKRRGDGEDVDNSESDAAKLE) is disordered. The short motif at 69 to 75 (KRKRKRR) is the Nuclear localization signal element. The SAP 2 domain maps to 91 to 125 (LEGMSYRELQALAKSRGLAANGSKKEVIERLLCAP). Positions 179–281 (TYHVLQVWFL…KSFECYARKY (103 aa)) constitute a WGR domain. Residues 308 to 426 (ETKLETRIAS…EIEIATKLLE (119 aa)) enclose the PARP alpha-helical domain. Residues 434–660 (DPLYARYKQL…LHVSFNFKKR (227 aa)) enclose the PARP catalytic domain.

Belongs to the ARTD/PARP family.

It is found in the nucleus. The enzyme catalyses NAD(+) + (ADP-D-ribosyl)n-acceptor = nicotinamide + (ADP-D-ribosyl)n+1-acceptor + H(+).. The catalysed reaction is L-aspartyl-[protein] + NAD(+) = 4-O-(ADP-D-ribosyl)-L-aspartyl-[protein] + nicotinamide. It catalyses the reaction L-glutamyl-[protein] + NAD(+) = 5-O-(ADP-D-ribosyl)-L-glutamyl-[protein] + nicotinamide. Its function is as follows. Involved in the base excision repair (BER) pathway, by catalyzing the poly(ADP-ribosyl)ation of a limited number of acceptor proteins involved in chromatin architecture and in DNA metabolism. This modification follows DNA damages and appears as an obligatory step in a detection/signaling pathway leading to the reparation of DNA strand breaks. This Oryza sativa subsp. japonica (Rice) protein is Poly [ADP-ribose] polymerase 2-A (PARP2-A).